Here is a 449-residue protein sequence, read N- to C-terminus: tRNA modification GTPase MnmE (449 aa).

R24, E85, and R124 together coordinate (6S)-5-formyl-5,6,7,8-tetrahydrofolate. In terms of domain architecture, TrmE-type G spans 220–369 (GIRTAIAGPP…LEEAIIQAFS (150 aa)). Residue N230 participates in K(+) binding. GTP is bound by residues 230–235 (NVGKSS), 249–255 (SNIAGTT), and 274–277 (DTAG). Residue S234 participates in Mg(2+) binding. Residues S249, I251, and T254 each coordinate K(+). T255 contacts Mg(2+). Position 449 (K449) interacts with (6S)-5-formyl-5,6,7,8-tetrahydrofolate.

The protein belongs to the TRAFAC class TrmE-Era-EngA-EngB-Septin-like GTPase superfamily. TrmE GTPase family. As to quaternary structure, homodimer. Heterotetramer of two MnmE and two MnmG subunits. It depends on K(+) as a cofactor.

The protein localises to the cytoplasm. Its function is as follows. Exhibits a very high intrinsic GTPase hydrolysis rate. Involved in the addition of a carboxymethylaminomethyl (cmnm) group at the wobble position (U34) of certain tRNAs, forming tRNA-cmnm(5)s(2)U34. The sequence is that of tRNA modification GTPase MnmE from Akkermansia muciniphila (strain ATCC BAA-835 / DSM 22959 / JCM 33894 / BCRC 81048 / CCUG 64013 / CIP 107961 / Muc).